We begin with the raw amino-acid sequence, 200 residues long: Thymidine kinase (200 aa).

Residues 9 to 16 and 88 to 91 contribute to the ATP site; these read STMNAGKS and DEAH. The active-site Proton acceptor is E89. Residues C146, C148, C183, and H186 each coordinate Zn(2+).

It belongs to the thymidine kinase family. In terms of assembly, homotetramer.

It is found in the cytoplasm. The enzyme catalyses thymidine + ATP = dTMP + ADP + H(+). The sequence is that of Thymidine kinase from Rhizobium etli (strain ATCC 51251 / DSM 11541 / JCM 21823 / NBRC 15573 / CFN 42).